The following is a 598-amino-acid chain: Transcription factor COE3 (598 aa).

Residues 1-23 form a disordered region; that stretch reads MFGIQENIPRGGTTMKEEPLGGG. Residues 63–66 form an interaction with DNA region; sequence RKSN. Residues 151–170 form a C5-type zinc finger; sequence CRVLLTHEIMCSRCCDKKSC. Interaction with DNA regions lie at residues 197–204 and 236–239; these read NCLKNAGN and NNSK. An IPT/TIG domain is found at 264 to 347; it reads PCIKAISPSE…KGAPGRFVYT (84 aa). Residues 452-483 are disordered; the sequence is TSQANDQVGYSRNTSSVSPRGYVPSSTPQQSN.

The protein belongs to the COE family. Forms either a homodimer or a heterodimer with a related family member.

The protein localises to the nucleus. Functionally, acts as a transcriptional activator. This chain is Transcription factor COE3 (coe3), found in Xenopus laevis (African clawed frog).